The following is a 222-amino-acid chain: Triosephosphate isomerase (222 aa).

A substrate-binding site is contributed by 9 to 11 (NFK). Histidine 93 (electrophile) is an active-site residue. The active-site Proton acceptor is glutamate 141. Residues isoleucine 146, glycine 181, and 202-203 (AS) each bind substrate.

It belongs to the triosephosphate isomerase family. As to quaternary structure, homotetramer; dimer of dimers.

It localises to the cytoplasm. The catalysed reaction is D-glyceraldehyde 3-phosphate = dihydroxyacetone phosphate. Its pathway is carbohydrate biosynthesis; gluconeogenesis. It functions in the pathway carbohydrate degradation; glycolysis; D-glyceraldehyde 3-phosphate from glycerone phosphate: step 1/1. Its function is as follows. Involved in the gluconeogenesis. Catalyzes stereospecifically the conversion of dihydroxyacetone phosphate (DHAP) to D-glyceraldehyde-3-phosphate (G3P). The protein is Triosephosphate isomerase of Methanothermus fervidus (strain ATCC 43054 / DSM 2088 / JCM 10308 / V24 S).